The following is a 257-amino-acid chain: tRNA (guanine-N(1)-)-methyltransferase (257 aa).

Residues G112 and 136–141 (LGDYVL) each bind S-adenosyl-L-methionine.

It belongs to the RNA methyltransferase TrmD family. In terms of assembly, homodimer.

It is found in the cytoplasm. It catalyses the reaction guanosine(37) in tRNA + S-adenosyl-L-methionine = N(1)-methylguanosine(37) in tRNA + S-adenosyl-L-homocysteine + H(+). Its function is as follows. Specifically methylates guanosine-37 in various tRNAs. The protein is tRNA (guanine-N(1)-)-methyltransferase of Salinispora arenicola (strain CNS-205).